The chain runs to 1004 residues: E3 ubiquitin-protein ligase NEDD4-like (1004 aa).

The C2 domain occupies L30–Y154. Disordered regions lie at residues S207–K230 and A272–V407. Residues P221 to L254 enclose the WW 1 domain. S341 is subject to Phosphoserine. T347 carries the phosphothreonine modification. Composition is skewed to polar residues over residues T347 to I359 and R366 to V376. S371 bears the Phosphoserine; by WNK1 and WNK4 mark. T396 bears the Phosphothreonine; by SGK1 mark. The region spanning P414–M447 is the WW 2 domain. The segment at G453 to V523 is disordered. A Phosphoserine modification is found at S475. S477 carries the phosphoserine; by SGK1 modification. Residues S478, S493, S504, S508, S512, and S516 each carry the phosphoserine modification. Basic and acidic residues predominate over residues G489–K500. 2 WW domains span residues S526–L559 and G577–L610. One can recognise an HECT domain in the interval R669 to V1003. Catalysis depends on C971, which acts as the Glycyl thioester intermediate.

As to quaternary structure, interacts with UBE2E3. Interacts with NDFIP1; this interaction activates the E3 ubiquitin-protein ligase. Interacts with NDFIP2; this interaction activates the E3 ubiquitin-protein ligase. Interacts (via WW domains) with SCN1A. Interacts (via WW domains) with SCN2A. Interacts (via WW domains) with SCN3A. Interacts (via WW domains) with SCN5A. Interacts (via WW domains) with SCN8A. Interacts (via WW domains) with SCN9A. Interacts (via WW domains) with SCN10A. Interacts (via WW domains) with CLCN5. Interacts with SMAD2. Interacts with SMAD3. Interacts with SMAD6. Interacts with SMAD7. The phosphorylated form interacts with 14-3-3 proteins. Interacts with TNK2. Interacts with WNK1. Interacts with SGK1. Interacts (via C2 domain) with NPC2. Interacts with ARRDC4. Interacts with KCNQ1; promotes internalization of KCNQ1. Interacts (via domains WW1, 3 and 4) with USP36; the interaction inhibits ubiquitination of, at least, NTRK1, KCNQ2 and KCNQ3 by NEDD4L. Interacts with PRRG4 (via cytoplasmic domain). Interacts with LDLRAD3; the interaction is direct. Interacts with UBE2D2. Interacts with TTYH2 and TTYH3. Post-translationally, phosphorylated; which impairs interaction with SCNN. Interaction with YWHAH inhibits dephosphorylation. Aldosterone induces Ser-477 phosphorylation by SGK1. Auto-ubiquitinated. Deubiquitinated by USP36, no effect on NEDD4L protein levels. Both proteins interact and regulate each other's ubiquitination levels. Highly expressed in liver and kidney. Also expressed in heart, brain and lung. Isoform 1 is expressed in kidney, lung and gut. Isoform 3 is ubiquitously expressed.

The protein resides in the cytoplasm. Its subcellular location is the golgi apparatus. The protein localises to the endosome. It localises to the multivesicular body. It carries out the reaction S-ubiquitinyl-[E2 ubiquitin-conjugating enzyme]-L-cysteine + [acceptor protein]-L-lysine = [E2 ubiquitin-conjugating enzyme]-L-cysteine + N(6)-ubiquitinyl-[acceptor protein]-L-lysine.. It catalyses the reaction [E2 ubiquitin-conjugating enzyme]-S-ubiquitinyl-L-cysteine + [acceptor protein]-L-cysteine = [E2 ubiquitin-conjugating enzyme]-L-cysteine + [acceptor protein]-S-ubiquitinyl-L-cysteine.. It functions in the pathway protein modification; protein ubiquitination. With respect to regulation, activated by NDFIP1- and NDFIP2-binding. Its function is as follows. E3 ubiquitin-protein ligase that mediates the polyubiquitination of lysine and cysteine residues on target proteins and is thereby implicated in the regulation of various signaling pathways including autophagy, innate immunity or DNA repair. Inhibits TGF-beta signaling by triggering SMAD2 and TGFBR1 ubiquitination and proteasome-dependent degradation. Downregulates autophagy and cell growth by ubiquitinating and reducing cellular ULK1 or ASCT2 levels. Promotes ubiquitination and internalization of various plasma membrane channels such as ENaC, SCN2A/Nav1.2, SCN3A/Nav1.3, SCN5A/Nav1.5, SCN9A/Nav1.7, SCN10A/Nav1.8, KCNA3/Kv1.3, KCNH2, EAAT1, KCNQ2/Kv7.2, KCNQ3/Kv7.3 or CLC5. Promotes ubiquitination and degradation of SGK1 and TNK2. Ubiquitinates BRAT1 and this ubiquitination is enhanced in the presence of NDFIP1. Plays a role in dendrite formation by melanocytes. Involved in the regulation of TOR signaling. Ubiquitinates and regulates protein levels of NTRK1 once this one is activated by NGF. Plays a role in antiviral innate immunity by catalyzing 'Lys-29'-linked cysteine ubiquitination of TRAF3, resulting in enhanced 'Lys-48' and 'Lys-63'-linked ubiquitination of TRAF3. Ubiquitinates TTYH2 and TYYH3 and regulates protein levels of TTYH2. The chain is E3 ubiquitin-protein ligase NEDD4-like (Nedd4l) from Mus musculus (Mouse).